The following is a 523-amino-acid chain: Volkensin (523 aa).

Residues Tyr74, Tyr113, Glu162, and Arg165 contribute to the active site. Residue 111 to 113 (GGY) coordinates AMP. 2 cysteine pairs are disulfide-bonded: Cys245/Cys269 and Cys285/Cys304. Positions 251–265 (QSDSPLVIRSFVDRN) are cleaved as a propeptide — linker peptide. The 128-residue stretch at 270–397 (PSGETTAFIV…YAASQAWRVT (128 aa)) folds into the Ricin B-type lectin 1 domain. A carbohydrate-binding positions include 287–291 (DVKVE), Gln300, Lys305, and Asn311. Cys328 and Cys343 are joined by a disulfide. A carbohydrate is bound by residues Asn358 and Asn398. Residues Asn358 and Asn398 are each glycosylated (N-linked (GlcNAc...) asparagine). The 124-residue stretch at 400–523 (TVPTVTTIVG…HGNSNQQWFL (124 aa)) folds into the Ricin B-type lectin 2 domain. Cystine bridges form between Cys414–Cys427 and Cys453–Cys471.

It in the N-terminal section; belongs to the ribosome-inactivating protein family. Type 2 RIP subfamily. Disulfide-linked dimer of A and B chains. N-glycosylated. Contains mannose and galactose. In terms of tissue distribution, expressed in roots (at protein level). Expressed in seeds (at protein level).

The catalysed reaction is Endohydrolysis of the N-glycosidic bond at one specific adenosine on the 28S rRNA.. With respect to regulation, hemagglutinating activity is inhibited by galactose and structurally related sugars. Has N-glycosidase activity and is responsible for inhibiting protein synthesis through the catalytic inactivation of 60S ribosomal subunits by removing a specific adenine of 28S rRNA. Inhibits GTP-dependent binding of EF2 (elongation factor 2) to ribosomes. In terms of biological role, binds to cell receptors and probably facilitates the entry into the cell of the A chain. Also acts as a galactose-specific lectin responsible for cell agglutination. The protein is Volkensin of Adenia volkensii (Kilyambiti plant).